Reading from the N-terminus, the 293-residue chain is Putative ABC transporter ATP-binding protein AF_0731 (293 aa).

The region spanning 2-236 (IEAVDLHFCY…RKLGIRSFSL (235 aa)) is the ABC transporter domain. 34-41 (GRNGAGKT) contributes to the ATP binding site.

Belongs to the ABC transporter superfamily.

The protein localises to the cell membrane. Its function is as follows. Probably part of an ABC transporter complex. Responsible for energy coupling to the transport system. The protein is Putative ABC transporter ATP-binding protein AF_0731 of Archaeoglobus fulgidus (strain ATCC 49558 / DSM 4304 / JCM 9628 / NBRC 100126 / VC-16).